The chain runs to 123 residues: Large ribosomal subunit protein uL14c (123 aa).

This sequence belongs to the universal ribosomal protein uL14 family. Part of the 50S ribosomal subunit.

It is found in the plastid. The protein resides in the chloroplast. Its function is as follows. Binds to 23S rRNA. The sequence is that of Large ribosomal subunit protein uL14c from Triticum aestivum (Wheat).